Consider the following 322-residue polypeptide: Porphobilinogen deaminase (322 aa).

Residue C254 is modified to S-(dipyrrolylmethanemethyl)cysteine.

This sequence belongs to the HMBS family. Monomer. It depends on dipyrromethane as a cofactor.

The enzyme catalyses 4 porphobilinogen + H2O = hydroxymethylbilane + 4 NH4(+). Its pathway is porphyrin-containing compound metabolism; protoporphyrin-IX biosynthesis; coproporphyrinogen-III from 5-aminolevulinate: step 2/4. Tetrapolymerization of the monopyrrole PBG into the hydroxymethylbilane pre-uroporphyrinogen in several discrete steps. The chain is Porphobilinogen deaminase from Methylococcus capsulatus (strain ATCC 33009 / NCIMB 11132 / Bath).